Consider the following 35-residue polypeptide: IDPPRYCNHIICYEDSECSQWCTAGCNSITSKCDT.

4-hydroxyproline occurs at positions 3 and 4. 3 disulfides stabilise this stretch: Cys-7/Cys-22, Cys-12/Cys-26, and Cys-18/Cys-33. A 4-carboxyglutamate mark is found at Glu-14 and Glu-17.

Expressed by the venom duct.

The protein resides in the secreted. The chain is Turripeptide gsp9a from Gemmula speciosa (Splendid gem-turris).